The sequence spans 485 residues: Pyruvate kinase (485 aa).

Position 33 (Arg33) interacts with substrate. K(+)-binding residues include Asn35, Ser37, Asp67, and Thr68. Position 35–38 (35–38 (NFSH)) interacts with ATP. Residues Arg74 and Lys155 each coordinate ATP. Glu221 is a binding site for Mg(2+). Substrate contacts are provided by Gly244, Asp245, and Thr277. Asp245 lines the Mg(2+) pocket.

It belongs to the pyruvate kinase family. Homotetramer. Requires Mg(2+) as cofactor. The cofactor is K(+).

It catalyses the reaction pyruvate + ATP = phosphoenolpyruvate + ADP + H(+). The protein operates within carbohydrate degradation; glycolysis; pyruvate from D-glyceraldehyde 3-phosphate: step 5/5. This is Pyruvate kinase (pyk) from Chlamydia trachomatis serovar D (strain ATCC VR-885 / DSM 19411 / UW-3/Cx).